A 361-amino-acid polypeptide reads, in one-letter code: MDFTSSKSVSLFETSLLKENQFQQPQQQPSSPIKPIKPILKLVVNSNKKYNNKNISNNNNNNNNNNNNVCGNINNNNELGDQSDIERSFLINNFEGSDQLTNPYYNSIDIESIIIEVYSNQFSKLNCDFQGLISSKSKILNSNNFSSDYNYNNYNNNNNNNNNNNNNNNNNNNNNNNNNNNNNNKNNNKNNNNKPNNFIHHHHHHHHYHHYHNHHKVENLIDSHIFIGLMAFLILFILMVIGLLIYKYNLKKRVLILLEKRYQRKKKVKTSQFGDDFTSAKFSQVFPKNLNINQKNKDDGDDSSGADDLSVGGESFDGESDFEHFKEVQVVGDIDNVFFFKNNNYYYEENFDNENLINKEF.

2 disordered regions span residues 53–75 and 150–211; these read KNISNNNNNNNNNNNNVCGNINN and NYNN…YHHY. The span at 150–198 shows a compositional bias: low complexity; that stretch reads NYNNYNNNNNNNNNNNNNNNNNNNNNNNNNNNNNNKNNNKNNNNKPNNF. Basic residues predominate over residues 199–211; it reads IHHHHHHHHYHHY. The helical transmembrane segment at 225–245 threads the bilayer; the sequence is IFIGLMAFLILFILMVIGLLI.

It is found in the membrane. This is an uncharacterized protein from Dictyostelium discoideum (Social amoeba).